The sequence spans 327 residues: ATPase ASNA1 homolog (327 aa).

26 to 33 serves as a coordination point for ATP; that stretch reads KGGVGKTT. Residue Asp-57 is part of the active site. Glu-238 and Asn-265 together coordinate ATP. Cys-274 and Cys-277 together coordinate Zn(2+).

It belongs to the arsA ATPase family. As to quaternary structure, homodimer.

It is found in the cytoplasm. Its subcellular location is the endoplasmic reticulum. In terms of biological role, ATPase required for the post-translational delivery of tail-anchored (TA) proteins to the endoplasmic reticulum. Recognizes and selectively binds the transmembrane domain of TA proteins in the cytosol. This complex then targets to the endoplasmic reticulum by membrane-bound receptors, where the tail-anchored protein is released for insertion. This process is regulated by ATP binding and hydrolysis. ATP binding drives the homodimer towards the closed dimer state, facilitating recognition of newly synthesized TA membrane proteins. ATP hydrolysis is required for insertion. Subsequently, the homodimer reverts towards the open dimer state, lowering its affinity for the membrane-bound receptor, and returning it to the cytosol to initiate a new round of targeting. The protein is ATPase ASNA1 homolog of Entamoeba histolytica (strain ATCC 30459 / HM-1:IMSS / ABRM).